The following is a 648-amino-acid chain: Threonine--tRNA ligase (648 aa).

Residues 1 to 61 (MINITFPDGA…TEDGSIEIVT (61 aa)) enclose the TGS domain. The tract at residues 242–540 (DHRKLGKELD…LIENYKGAFP (299 aa)) is catalytic. Residues Cys-336, His-387, and His-517 each coordinate Zn(2+).

It belongs to the class-II aminoacyl-tRNA synthetase family. As to quaternary structure, homodimer. Zn(2+) serves as cofactor.

It is found in the cytoplasm. It catalyses the reaction tRNA(Thr) + L-threonine + ATP = L-threonyl-tRNA(Thr) + AMP + diphosphate + H(+). Its function is as follows. Catalyzes the attachment of threonine to tRNA(Thr) in a two-step reaction: L-threonine is first activated by ATP to form Thr-AMP and then transferred to the acceptor end of tRNA(Thr). Also edits incorrectly charged L-seryl-tRNA(Thr). In Streptococcus thermophilus (strain ATCC BAA-250 / LMG 18311), this protein is Threonine--tRNA ligase.